A 429-amino-acid chain; its full sequence is Adenylosuccinate synthetase (429 aa).

Residues 13–19 and 41–43 each bind GTP; these read GDEGKGK and GHT. The Proton acceptor role is filled by D14. Mg(2+) contacts are provided by D14 and G41. IMP is bound by residues 14–17, 39–42, T130, R144, Q225, T240, and R304; these read DEGK and NAGH. H42 acts as the Proton donor in catalysis. 300–306 lines the substrate pocket; sequence ATTGRAR. GTP is bound by residues R306, 332–334, and 413–415; these read KLD and STG.

Belongs to the adenylosuccinate synthetase family. In terms of assembly, homodimer. Requires Mg(2+) as cofactor.

The protein localises to the cytoplasm. The enzyme catalyses IMP + L-aspartate + GTP = N(6)-(1,2-dicarboxyethyl)-AMP + GDP + phosphate + 2 H(+). Its pathway is purine metabolism; AMP biosynthesis via de novo pathway; AMP from IMP: step 1/2. Plays an important role in the de novo pathway of purine nucleotide biosynthesis. Catalyzes the first committed step in the biosynthesis of AMP from IMP. In Pseudomonas fluorescens (strain Pf0-1), this protein is Adenylosuccinate synthetase.